We begin with the raw amino-acid sequence, 447 residues long: Gustatory receptor family protein 3 (447 aa).

At 1-69 (MTITASNTLE…HTHSSARNTM (69 aa)) the chain is on the extracellular side. A helical membrane pass occupies residues 70 to 90 (FKWPLTIYNYLTLAILTAATI). The Cytoplasmic segment spans residues 91-116 (RRISQIKQKSATNEEKDAAFHVLNPT). Residues 117-137 (FVLTLCHALLMFSGLAAGFLL) traverse the membrane as a helical segment. Residues 138–171 (LKLQKQREKMYHVLDQGLGRNRNEEHDSHHFKLN) lie on the Extracellular side of the membrane. The helical transmembrane segment at 172-192 (KLFISISFSFAAALSFVQIAT) threads the bilayer. At 193–211 (KMRYLDLPDTPDLINRKIY) the chain is on the cytoplasmic side. The chain crosses the membrane as a helical span at residues 212 to 232 (FVILEGYVIFIASSCISLVAI). The Extracellular segment spans residues 233–292 (LFFQLCRILQFSIGQLIEEMVPKEKEECPLPEQSLQQIHDVQIHYQEISNAKLYIEQNFS). Residues 293–313 (FSLFYTYGCCIPLTCLLGYIA) form a helical membrane-spanning segment. At 314–328 (FRNGIQADMAETFSV) the chain is on the cytoplasmic side. Residues 329–349 (AIWLTNTMLALMLFSIPAFMI) traverse the membrane as a helical segment. Over 350–405 (AEEGDKLLTASFKMYHETLCEERDLLVLSQMSFLSFQMHATKLTLTAGNFFMMNRK) the chain is Extracellular. The chain crosses the membrane as a helical span at residues 406–426 (IMISLFSAIFTYFLILVQFDA). Topologically, residues 427 to 447 (EKERAGECNNQSRVLIVQPPV) are cytoplasmic.

It belongs to the insect chemoreceptor superfamily. Gustatory receptor (GR) family. As to expression, expressed in I2 pharyngeal neurons.

Its subcellular location is the membrane. In terms of biological role, chemoreceptor involved in light-induced avoidance behavior. Probably acts as a molecular sensor in I2 pharyngeal neurons, required for the inhibition of feeding in response to light and hydrogen peroxide. Involved in circadian rhythms, probably by acting as a light sensor. In contrast to lite-1, does not act as a photoreceptor. The chain is Gustatory receptor family protein 3 from Caenorhabditis elegans.